The chain runs to 373 residues: Ribosomal RNA small subunit methyltransferase H (373 aa).

S-adenosyl-L-methionine-binding positions include 92–94 (GGH), aspartate 111, tyrosine 138, aspartate 159, and glutamine 166. Basic and acidic residues-rich tracts occupy residues 343–355 (AERA…ERNP) and 363–373 (RALEKVGGRGS). Positions 343–373 (AERADEQEIERNPRSAPVRLRALEKVGGRGS) are disordered.

This sequence belongs to the methyltransferase superfamily. RsmH family.

It localises to the cytoplasm. It catalyses the reaction cytidine(1402) in 16S rRNA + S-adenosyl-L-methionine = N(4)-methylcytidine(1402) in 16S rRNA + S-adenosyl-L-homocysteine + H(+). Its function is as follows. Specifically methylates the N4 position of cytidine in position 1402 (C1402) of 16S rRNA. The protein is Ribosomal RNA small subunit methyltransferase H of Mycolicibacterium smegmatis (strain ATCC 700084 / mc(2)155) (Mycobacterium smegmatis).